The primary structure comprises 287 residues: 23S rRNA (uridine(2479)-2'-O)-methyltransferase (287 aa).

S-adenosyl-L-methionine-binding positions include 210–211 (TD), Gly-232, and 252–254 (IPM).

The protein belongs to the class IV-like SAM-binding methyltransferase superfamily. RNA methyltransferase TsnR/AvirB family. Homodimer.

The enzyme catalyses uridine(2479) in 23S rRNA + S-adenosyl-L-methionine = 2'-O-methyluridine(2479) in 23S rRNA + S-adenosyl-L-homocysteine + H(+). In terms of biological role, specifically methylates the 2'-O-ribose position of uridine-2479 in 23S ribosomal RNA. Confers resistance to antibiotic avilamycin, an orthosomycin antibiotic. This Streptomyces viridochromogenes protein is 23S rRNA (uridine(2479)-2'-O)-methyltransferase (aviRb).